A 260-amino-acid polypeptide reads, in one-letter code: DNA repair protein RecO (260 aa).

Belongs to the RecO family.

Involved in DNA repair and RecF pathway recombination. This Streptococcus suis (strain 98HAH33) protein is DNA repair protein RecO.